We begin with the raw amino-acid sequence, 606 residues long: Vacuolar calcium ion transporter (606 aa).

The tract at residues 1–110 (MSPPRRVSFP…NSLDPNPGLM (110 aa)) is disordered. The Cytoplasmic segment spans residues 1–137 (MSPPRRVSFP…PTYWGSMKAA (137 aa)). Residues 18-30 (PPLADSPLSSPKL) show a composition bias toward low complexity. Polar residues predominate over residues 36–56 (QSSSTPIVSSNLPTDTTNSAS). A helical transmembrane segment spans residues 138–158 (ITSTWLNVLLVFIPIGWALYL). The Vacuolar segment spans residues 159–170 (AKHNGGKDSISD). Residues 171–191 (TAVFCCTFIAIIPLAGLLGFA) form a helical membrane-spanning segment. At 192 to 204 (TEEAALRLGQTLG) the chain is on the cytoplasmic side. A helical membrane pass occupies residues 205–225 (GLLNATLGNAVELIVAILALI). Topologically, residues 226-236 (KCELQVVQSSL) are vacuolar. The chain crosses the membrane as a helical span at residues 237-257 (VGSILSNILLVLGMCFFAGGV). The Cytoplasmic segment spans residues 258–272 (RFAEQAIKSTAAQLN). A helical membrane pass occupies residues 273-293 (ASLLLIAVIAVLIPSAFHFSI). Residues 294–313 (SSSTSNTDASELANGEGADL) lie on the Vacuolar side of the membrane. The chain crosses the membrane as a helical span at residues 314-334 (LSMSHAVSILLLILYLGYLLF). Over 335 to 437 (QMWTHATYYV…EEEEETPQMN (103 aa)) the chain is Cytoplasmic. The disordered stretch occupies residues 376–434 (DEEESYSTATTVSDAAVPPSARAEGGEVPATHGPGTAAAETGNRVEHEDAEEEEEEETP). Acidic residues predominate over residues 423-433 (EDAEEEEEEET). A helical membrane pass occupies residues 438–458 (VVCTIALMVIDTVLVGVTAEF). Residues 459–477 (LVDSINGMVESNPSLSAEW) are Vacuolar-facing. The chain crosses the membrane as a helical span at residues 478–498 (VGLILLPIVGNAAEHFTAVSV). Topologically, residues 499–505 (SVKDKLD) are cytoplasmic. Residues 506-526 (LSISVAVGSSIQIALFVIPVI) form a helical membrane-spanning segment. Topologically, residues 527-535 (ELLAWTIGK) are vacuolar. A helical transmembrane segment spans residues 536 to 556 (PMTLLFDPYESIVLFLSVLIV). The Cytoplasmic segment spans residues 557-566 (NQTLADGRSN). A helical transmembrane segment spans residues 567–587 (WMEGMVLMMLYIIIAVSFWYY). Residues 588–606 (PGSTTATLLGCQDSSSVTG) lie on the Vacuolar side of the membrane.

Belongs to the Ca(2+):cation antiporter (CaCA) (TC 2.A.19) family.

The protein localises to the vacuole membrane. Its function is as follows. Has a role in promoting intracellular calcium ion sequestration via the exchange of calcium ions for hydrogen ions across the vacuolar membrane. In Cryptococcus neoformans var. grubii serotype A (strain H99 / ATCC 208821 / CBS 10515 / FGSC 9487) (Filobasidiella neoformans var. grubii), this protein is Vacuolar calcium ion transporter.